The primary structure comprises 331 residues: MRLLVTGGAGFIGANFVHLALREARTSSITVLDALTYAGSRESLAPVADRIRLVQGDITDAALVGDLVAESDAVVHFAAETHVDNALADPEPFLHSNVVGTYTILEAVRRHNVRLHHVSTDEVYGDLELDNPARFNETTPYNPSSPYSSTKAAADLLVRAWVRSYGVRATISNCSNNYGPYQHVEKFIPRQITNVLTGRRPKLYGAGANVRDWIHVDDHNSAVWRILTDGTIGRTYLIGAECERNNLTVMRTILKLMGRDPDDFDHVTDRAGHDLRYAIDPSTLQDELGWAPKHTDFEAGLTDTIDWYRANESWWRPLKDTVEAKYQERGQ.

Residues 11–12, 33–36, 57–58, 77–81, and serine 96 contribute to the NAD(+) site; these read FI, DALT, DI, and FAAET. Substrate is bound at residue threonine 81. Residue threonine 120 participates in substrate binding. Aspartate 121 (proton donor) is an active-site residue. Catalysis depends on proton acceptor residues glutamate 122 and tyrosine 147. Residue 147-151 coordinates NAD(+); it reads YSSTK. Position 176 (asparagine 176) interacts with substrate. Asparagine 177 contacts NAD(+). Substrate-binding positions include 186–191, 202–204, arginine 211, asparagine 246, and 269–273; these read KFIPRQ, KLY, and DRAGH.

This sequence belongs to the NAD(P)-dependent epimerase/dehydratase family. dTDP-glucose dehydratase subfamily. In terms of assembly, homodimer. NAD(+) serves as cofactor.

The catalysed reaction is dTDP-alpha-D-glucose = dTDP-4-dehydro-6-deoxy-alpha-D-glucose + H2O. It participates in carbohydrate biosynthesis; dTDP-L-rhamnose biosynthesis. In terms of biological role, catalyzes the dehydration of dTDP-D-glucose to form dTDP-6-deoxy-D-xylo-4-hexulose via a three-step process involving oxidation, dehydration and reduction. Involved in the biosynthesis of the dTDP-L-rhamnose which is a component of the critical linker, D-N-acetylglucosamine-L-rhamnose disaccharide, which connects the galactan region of arabinogalactan to peptidoglycan via a phosphodiester linkage. This chain is dTDP-glucose 4,6-dehydratase (rmlB), found in Mycolicibacterium smegmatis (strain ATCC 700084 / mc(2)155) (Mycobacterium smegmatis).